Reading from the N-terminus, the 153-residue chain is uncharacterized protein (153 aa).

An N-terminal signal peptide occupies residues 1–19 (MRKYIPLVLFIFSWPVLCA). Residues Arg46, Glu54, and Arg88 contribute to the active site.

It belongs to the thermonuclease family.

This is an uncharacterized protein from Escherichia coli.